A 303-amino-acid polypeptide reads, in one-letter code: Eukaryotic translation initiation factor 3 subunit G (303 aa).

4 disordered regions span residues 1 to 32 (MAAVAKPVQAWADDDDIDDGTTERLPDPQTIV), 81 to 100 (GLSAKDGPGPASDTTSVGEN), 105 to 126 (PSANWRKDQKDESKDANANAMK), and 181 to 215 (GAAGGAGAKKGSYVPPALRGDRKEGEKMGGGAGGK). The segment covering 109–126 (WRKDQKDESKDANANAMK) has biased composition (basic and acidic residues). Residues 223-301 (ATLRVTNVSE…LILRVEFAKK (79 aa)) enclose the RRM domain.

The protein belongs to the eIF-3 subunit G family. As to quaternary structure, component of the eukaryotic translation initiation factor 3 (eIF-3) complex.

The protein resides in the cytoplasm. Functionally, RNA-binding component of the eukaryotic translation initiation factor 3 (eIF-3) complex, which is involved in protein synthesis of a specialized repertoire of mRNAs and, together with other initiation factors, stimulates binding of mRNA and methionyl-tRNAi to the 40S ribosome. The eIF-3 complex specifically targets and initiates translation of a subset of mRNAs involved in cell proliferation. This subunit can bind 18S rRNA. This Pyricularia oryzae (strain 70-15 / ATCC MYA-4617 / FGSC 8958) (Rice blast fungus) protein is Eukaryotic translation initiation factor 3 subunit G.